We begin with the raw amino-acid sequence, 930 residues long: Protein ARABIDILLO 1 (930 aa).

The Nuclear localization signal signature appears at 3 to 8; the sequence is RRVRRK. Residues 44–90 form the F-box domain; that stretch reads FVDWISLPYDTVLQLFTCLNYRDRASLASTCKTWRCLGASSCLWTSL. 13 ARM repeats span residues 172–212, 244–285, 379–418, 428–467, 469–508, 510–552, 554–594, 600–639, 641–683, 685–724, 726–766, 790–831, and 835–875; these read RITS…KHCP, TSNI…TSSQ, PEGL…TFVV, CGRA…NLSV, ANIA…NLSV, EEHK…NLAA, DKCS…NLAA, NNNA…NLSF, DKNR…GLSV, EANS…NLAF, PGNA…YMFD, LDGA…QVTE, and IQEA…QFTI.

The protein belongs to the beta-catenin family. In terms of assembly, interacts with SNL1. Interacts with MYB53, MYB92 and MYB93. As to expression, expressed ubiquitously, with higher levels in root tip, pericycle and vasculature.

The protein localises to the nucleus. Promotes lateral root initiation and development, independently of auxin (IAA) and abscisis acid (ABA). In Arabidopsis thaliana (Mouse-ear cress), this protein is Protein ARABIDILLO 1 (FBX5).